The primary structure comprises 74 residues: Lambda-hexatoxin-Hv1d (74 aa).

The first 22 residues, 1-22 (MNTATCFIVLLVVATVIGGIEA), serve as a signal peptide directing secretion. Positions 23–35 (GESDMRKDVMGLF) are excised as a propeptide. Disulfide bonds link Cys40–Cys54, Cys47–Cys59, Cys50–Cys51, and Cys53–Cys69.

The protein belongs to the neurotoxin 11 (kappa toxin) family. In terms of tissue distribution, expressed by the venom gland.

It is found in the secreted. Its function is as follows. This excitatory toxin inhibits insect calcium-activated potassium (KCa) channels (Slo-type). The protein is Lambda-hexatoxin-Hv1d of Hadronyche versuta (Blue mountains funnel-web spider).